A 393-amino-acid chain; its full sequence is NADH-quinone oxidoreductase subunit D (393 aa).

It belongs to the complex I 49 kDa subunit family. In terms of assembly, NDH-1 is composed of 14 different subunits. Subunits NuoB, C, D, E, F, and G constitute the peripheral sector of the complex.

The protein resides in the cell inner membrane. It carries out the reaction a quinone + NADH + 5 H(+)(in) = a quinol + NAD(+) + 4 H(+)(out). In terms of biological role, NDH-1 shuttles electrons from NADH, via FMN and iron-sulfur (Fe-S) centers, to quinones in the respiratory chain. The immediate electron acceptor for the enzyme in this species is believed to be ubiquinone. Couples the redox reaction to proton translocation (for every two electrons transferred, four hydrogen ions are translocated across the cytoplasmic membrane), and thus conserves the redox energy in a proton gradient. This chain is NADH-quinone oxidoreductase subunit D, found in Ehrlichia chaffeensis (strain ATCC CRL-10679 / Arkansas).